The chain runs to 424 residues: Fasciclin-like arabinogalactan protein 1 (424 aa).

An N-terminal signal peptide occupies residues 1-24 (MAKKMSSLIIIFNILLLLTTQTHA). FAS1 domains lie at 25 to 170 (HNVT…SRVL) and 184 to 323 (EMNL…DKVL). N26, N128, N160, N186, and N240 each carry an N-linked (GlcNAc...) asparagine glycan. Residues 338-393 (APAPAPEDGDVADSPKAAKGKAKGKKKKAAPSPDNDPFGDSDSPAEGPDGEADDAT) form a disordered region. Over residues 355 to 366 (AKGKAKGKKKKA) the composition is skewed to basic residues. A lipid anchor (GPI-anchor amidated aspartate) is attached at D396. The propeptide at 397 to 424 (AGAVRIIGGAKAGLVVSLLCLFASSWLL) is removed in mature form.

This sequence belongs to the fasciclin-like AGP family. As to expression, preferentially expressed in flowers.

It localises to the secreted. Its subcellular location is the extracellular space. The protein resides in the apoplast. The protein localises to the cell membrane. Its function is as follows. May be a cell surface adhesion protein. The protein is Fasciclin-like arabinogalactan protein 1 (FLA1) of Arabidopsis thaliana (Mouse-ear cress).